A 332-amino-acid chain; its full sequence is F-box/SPRY domain-containing protein 1 (332 aa).

The interval 1-82 (MAENDGETIV…RSPRRPEVSA (82 aa)) is disordered. Polar residues-rich tracts occupy residues 15–28 (CNLTASTPMKSSGL) and 49–64 (NPSSGTPDESPKQLTP). The F-box domain maps to 79-127 (EVSASRLPLKVLNQIFQYLPLKDLRSAMLTCHSWNNALSMEDSDIWQYL). The B30.2/SPRY domain maps to 138–330 (SDPFLLAELG…VTMVYVGSPQ (193 aa)).

It belongs to the FBXO45/Fsn family. Component of an SCF (SKP1-CUL1-F-box protein) E3 ubiquitin ligase complex composed of cul-1, fsn-1, rpm-1 and skr-1. Interacts (via SPRY domain) with scd-2 (via cytoplasmic domain). Interacts (via SPRY domain) with convertase egl-3 (via C-terminus). As to expression, expressed in GABAergic neuromuscular junctions (NMJs).

Its subcellular location is the synapse. It functions in the pathway protein modification; protein ubiquitination. Its function is as follows. Component of a SCF (SKP1-CUL1-F-box protein) E3 ubiquitin ligase complex which is required for the restriction and/or maturation of synapses in GABAergic neuromuscular junction (NMJ) presynaptic neurons. Promotes NRJ synapse development and synaptic transmission by negatively regulating the daf-2/InsR pathway in muscles. By targeting convertase egl-3 for degradation, negatively modulates insulin-like protein ins-4 and ins-6 processing. May stabilize synapse formation by promoting the down-regulation of scd-2. Regulates axon termination in PLM and ALM neurons. This is F-box/SPRY domain-containing protein 1 (fsn-1) from Caenorhabditis elegans.